Reading from the N-terminus, the 272-residue chain is Indole-3-glycerol phosphate synthase (272 aa).

This sequence belongs to the TrpC family.

It catalyses the reaction 1-(2-carboxyphenylamino)-1-deoxy-D-ribulose 5-phosphate + H(+) = (1S,2R)-1-C-(indol-3-yl)glycerol 3-phosphate + CO2 + H2O. It functions in the pathway amino-acid biosynthesis; L-tryptophan biosynthesis; L-tryptophan from chorismate: step 4/5. The chain is Indole-3-glycerol phosphate synthase from Mycobacteroides abscessus (strain ATCC 19977 / DSM 44196 / CCUG 20993 / CIP 104536 / JCM 13569 / NCTC 13031 / TMC 1543 / L948) (Mycobacterium abscessus).